Consider the following 231-residue polypeptide: Small ribosomal subunit protein uS3 (231 aa).

A KH type-2 domain is found at valine 17–glutamine 86.

Belongs to the universal ribosomal protein uS3 family. In terms of assembly, part of the 30S ribosomal subunit.

Binds the lower part of the 30S subunit head. The chain is Small ribosomal subunit protein uS3 from Methanoregula boonei (strain DSM 21154 / JCM 14090 / 6A8).